Reading from the N-terminus, the 213-residue chain is Large ribosomal subunit protein uL3 (213 aa).

The segment at 130–161 (KRGNMTHGSKNHRLPGSTGAGTTPGRVYPGKR) is disordered.

It belongs to the universal ribosomal protein uL3 family. As to quaternary structure, part of the 50S ribosomal subunit. Forms a cluster with proteins L14 and L19.

Its function is as follows. One of the primary rRNA binding proteins, it binds directly near the 3'-end of the 23S rRNA, where it nucleates assembly of the 50S subunit. In Picosynechococcus sp. (strain ATCC 27264 / PCC 7002 / PR-6) (Agmenellum quadruplicatum), this protein is Large ribosomal subunit protein uL3.